The following is a 706-amino-acid chain: Melanopsin (706 aa).

The Extracellular segment spans residues 1-86 (MTEIPSFQPP…VWDIPPLAHY (86 aa)). Residues Asn-12, Asn-64, and Asn-69 are each glycosylated (N-linked (GlcNAc...) asparagine). The chain crosses the membrane as a helical span at residues 87 to 107 (IVGTAVFCIGCCGMFGNAVVV). The Cytoplasmic portion of the chain corresponds to 108–121 (YSFIKSKGLRTPAN). The helical transmembrane segment at 122-142 (FFIINLALSDFLMNLTNMPIF) threads the bilayer. The Extracellular portion of the chain corresponds to 143–159 (AVNSAFQRWLLSDFACE). An intrachain disulfide couples Cys-158 to Cys-236. A helical transmembrane segment spans residues 160-180 (LYGFAGGLFGCLSINTLMAIS). Over 181-201 (MDRYLVITKPFLVMRIVTKQR) the chain is Cytoplasmic. The chain crosses the membrane as a helical span at residues 202–222 (VMFAILLLWIWSLVWALPPLF). At 223 to 248 (GWSAYVSEGFGTSCTFDYMTPKLSYH) the chain is on the extracellular side. Residues 249 to 269 (IFTYIIFFTMYFIPGGVMIYC) form a helical membrane-spanning segment. The Cytoplasmic portion of the chain corresponds to 270-314 (YYNIFATVKSGDKQFGKAVKEMAHEDVKNKAQQERQRKNEIKTAK). A helical transmembrane segment spans residues 315–335 (IAFIVISLFMSAWTPYAVVSA). At 336–351 (LGTLGYQDLVTPYLQS) the chain is on the extracellular side. A helical transmembrane segment spans residues 352 to 372 (IPAMFAKSSAVYSPIVYAITY). Lys-358 is subject to N6-(retinylidene)lysine. At 373 to 706 (PKFREAVKKH…LSEAHDETVL (334 aa)) the chain is on the cytoplasmic side. Disordered regions lie at residues 393 to 446 (SEEE…RQDT), 571 to 599 (RTES…SFNT), and 630 to 658 (QSSE…NETE). 2 stretches are compositionally biased toward low complexity: residues 404-418 (QSSA…QTTA) and 426-442 (SVDS…SGVS). A compositionally biased stretch (basic and acidic residues) spans 571–593 (RTESGYDRSQDSQRKKVVGDTHR). Over residues 645–658 (GITEVDTDSENETE) the composition is skewed to acidic residues.

The protein belongs to the G-protein coupled receptor 1 family. Opsin subfamily. As to expression, expressed in Joseph cells and photoreceptor cells of the dorsal ocelli.

The protein localises to the cell membrane. Its function is as follows. Photoreceptor implicated in non-image-forming responses to light. Photoisomerizes covalently bound all-trans retinal back to 11-cis retinal. Most likely coupled to the G(q) signaling cascade. The polypeptide is Melanopsin (Branchiostoma belcheri (Amphioxus)).